The sequence spans 93 residues: Small ribosomal subunit protein uS19 (93 aa).

Residues 73–93 (EFSPTRTYRGHDKKDKKIQKK) are disordered.

It belongs to the universal ribosomal protein uS19 family.

Functionally, protein S19 forms a complex with S13 that binds strongly to the 16S ribosomal RNA. This chain is Small ribosomal subunit protein uS19, found in Phytoplasma mali (strain AT).